The sequence spans 431 residues: Adenylosuccinate synthetase (431 aa).

GTP contacts are provided by residues 13 to 19 (GDEGKGK) and 41 to 43 (GHT). The active-site Proton acceptor is D14. D14 and G41 together coordinate Mg(2+). Residues 14 to 17 (DEGK), 39 to 42 (NAGH), T130, R144, Q225, T240, and R304 contribute to the IMP site. The Proton donor role is filled by H42. 300–306 (AVTGRPR) contacts substrate. GTP contacts are provided by residues R306, 332 to 334 (KLD), and 415 to 417 (STG).

This sequence belongs to the adenylosuccinate synthetase family. Homodimer. It depends on Mg(2+) as a cofactor.

It is found in the cytoplasm. The enzyme catalyses IMP + L-aspartate + GTP = N(6)-(1,2-dicarboxyethyl)-AMP + GDP + phosphate + 2 H(+). It functions in the pathway purine metabolism; AMP biosynthesis via de novo pathway; AMP from IMP: step 1/2. Functionally, plays an important role in the de novo pathway of purine nucleotide biosynthesis. Catalyzes the first committed step in the biosynthesis of AMP from IMP. This Legionella pneumophila subsp. pneumophila (strain Philadelphia 1 / ATCC 33152 / DSM 7513) protein is Adenylosuccinate synthetase.